Reading from the N-terminus, the 874-residue chain is Alanine--tRNA ligase (874 aa).

Positions 562, 566, 665, and 669 each coordinate Zn(2+).

This sequence belongs to the class-II aminoacyl-tRNA synthetase family. It depends on Zn(2+) as a cofactor.

Its subcellular location is the cytoplasm. The enzyme catalyses tRNA(Ala) + L-alanine + ATP = L-alanyl-tRNA(Ala) + AMP + diphosphate. In terms of biological role, catalyzes the attachment of alanine to tRNA(Ala) in a two-step reaction: alanine is first activated by ATP to form Ala-AMP and then transferred to the acceptor end of tRNA(Ala). Also edits incorrectly charged Ser-tRNA(Ala) and Gly-tRNA(Ala) via its editing domain. This Pseudomonas putida (strain ATCC 47054 / DSM 6125 / CFBP 8728 / NCIMB 11950 / KT2440) protein is Alanine--tRNA ligase.